A 227-amino-acid polypeptide reads, in one-letter code: C4-dicarboxylate TRAP transporter small permease protein DctQ (227 aa).

Residues 1–7 (MLRILDR) lie on the Cytoplasmic side of the membrane. The helical transmembrane segment at 8-28 (AEEVLIAALIATATVLIFVSV) threads the bilayer. The Periplasmic segment spans residues 29–67 (THRFTLGFVADFVGFFRGHGMTGAAAAAKSLYTTLRGIN). A helical membrane pass occupies residues 68–88 (LVWAQELCIILFVWMAKFGAA). Residues 89 to 112 (YGVRTGIHVGIDVLINRLDAPKRR) lie on the Cytoplasmic side of the membrane. The chain crosses the membrane as a helical span at residues 113 to 133 (FFILLGLGAGALFTGIIATLG). The Periplasmic segment spans residues 134-149 (ANFVLHMYHASSTSPD). A helical membrane pass occupies residues 150–170 (LELPMWLVYLAIPMGSSLMCF). Topologically, residues 171 to 227 (RFLQVAFGFARTGELPHHDHGHVDGVDTENEGIDAEGDVLLHSPLTPRDLVEKPKDN) are cytoplasmic.

This sequence belongs to the TRAP transporter small permease family. The complex comprises the extracytoplasmic solute receptor protein DctP, and the two transmembrane proteins DctQ and DctM.

The protein resides in the cell inner membrane. Functionally, part of the tripartite ATP-independent periplasmic (TRAP) transport system DctPQM involved in C4-dicarboxylates uptake. The chain is C4-dicarboxylate TRAP transporter small permease protein DctQ from Rhodobacter capsulatus (Rhodopseudomonas capsulata).